Here is a 179-residue protein sequence, read N- to C-terminus: Large ribosomal subunit protein uL6 (179 aa).

It belongs to the universal ribosomal protein uL6 family. In terms of assembly, part of the 50S ribosomal subunit.

This protein binds to the 23S rRNA, and is important in its secondary structure. It is located near the subunit interface in the base of the L7/L12 stalk, and near the tRNA binding site of the peptidyltransferase center. This is Large ribosomal subunit protein uL6 from Streptomyces griseus subsp. griseus (strain JCM 4626 / CBS 651.72 / NBRC 13350 / KCC S-0626 / ISP 5235).